The primary structure comprises 235 residues: Probable flavin-dependent thymidylate synthase (235 aa).

The ThyX domain occupies methionine 1–glutamate 229. Residues serine 70 and arginine 93–arginine 95 contribute to the FAD site. Residues glutamate 90 to arginine 93, serine 103 to arginine 105, and arginine 168 each bind dUMP. The ThyX motif motif lies at arginine 93–serine 103. Asparagine 184–arginine 186 is a binding site for FAD. Residue arginine 195 participates in dUMP binding. Arginine 195 (involved in ionization of N3 of dUMP, leading to its activation) is an active-site residue.

It belongs to the thymidylate synthase ThyX family. Homotetramer. FAD is required as a cofactor.

The enzyme catalyses dUMP + (6R)-5,10-methylene-5,6,7,8-tetrahydrofolate + NADPH + H(+) = dTMP + (6S)-5,6,7,8-tetrahydrofolate + NADP(+). It participates in pyrimidine metabolism; dTTP biosynthesis. In terms of biological role, catalyzes the reductive methylation of 2'-deoxyuridine-5'-monophosphate (dUMP) to 2'-deoxythymidine-5'-monophosphate (dTMP) while utilizing 5,10-methylenetetrahydrofolate (mTHF) as the methyl donor, and NADPH and FADH(2) as the reductant. This is Probable flavin-dependent thymidylate synthase (48) from Mycobacterium (Mycobacteriophage D29).